The chain runs to 1030 residues: FACT complex subunit spt-16 (1030 aa).

Residues 424-445 (RLKSNVIKFKEEQENREAEKDN) are a coiled coil. Basic and acidic residues-rich tracts occupy residues 435-449 (EQEN…DQKK) and 464-477 (TRNK…RKER). Disordered regions lie at residues 435 to 477 (EQEN…RKER) and 491 to 514 (ARLS…SYKT). Positions 623–645 (RLIKEMQKRFKTEEAEEREKEGA) form a coiled coil. The segment at 927 to 1030 (VESDNEEAMD…KSGPSHKRRK (104 aa)) is disordered. Acidic residues-rich tracts occupy residues 929 to 951 (SDNE…EEDA) and 958 to 983 (ESDE…DSDE). The stretch at 987 to 1007 (KDWSDLEEEAANADKRREVEE) forms a coiled coil. The segment covering 998–1014 (NADKRREVEEPSRDRDR) has biased composition (basic and acidic residues). The span at 1015 to 1030 (KRPHSSKSGPSHKRRK) shows a compositional bias: basic residues.

This sequence belongs to the peptidase M24 family. SPT16 subfamily. Component of the FACT complex, a stable heterodimer of spt-16 and hmg-3 or hmg-4. Expressed in the germline and somatic cells.

It is found in the nucleus. It localises to the chromosome. Component of the FACT complex, a general chromatin factor that acts to reorganize nucleosomes. The FACT complex is involved in multiple processes that require DNA as a template such as mRNA elongation, DNA replication and DNA repair. During transcription elongation the FACT complex acts as a histone chaperone that both destabilizes and restores nucleosomal structure. It facilitates the passage of RNA polymerase II and transcription by promoting the dissociation of one histone H2A-H2B dimer from the nucleosome, then subsequently promotes the reestablishment of the nucleosome following the passage of RNA polymerase II. In embryos, promotes cell cycle progression and chromosomal segregation. Plays a role in the development of the anterior pharynx during embryonic development. This is FACT complex subunit spt-16 from Caenorhabditis elegans.